The primary structure comprises 414 residues: uncharacterized protein (414 aa).

Disordered stretches follow at residues 136–168 (SSKSMTPTAEKQLEKPLENGSELQEGDSLTVPT), 297–333 (PQNFPNSGMQRAVQAPRPQNKMSYHRNNKNRNAENAS), and 346–414 (ALNA…NGSK). Positions 350–359 (PSRSRPTHGS) are enriched in polar residues. Over residues 399 to 414 (SKSEKIYPEPRRNGSK) the composition is skewed to basic and acidic residues.

This is an uncharacterized protein from Homo sapiens (Human).